A 226-amino-acid chain; its full sequence is Cytidylate kinase (226 aa).

11-19 contacts ATP; sequence GPAAAGKST.

This sequence belongs to the cytidylate kinase family. Type 1 subfamily.

Its subcellular location is the cytoplasm. The catalysed reaction is CMP + ATP = CDP + ADP. It carries out the reaction dCMP + ATP = dCDP + ADP. This chain is Cytidylate kinase, found in Bacillus licheniformis (strain ATCC 14580 / DSM 13 / JCM 2505 / CCUG 7422 / NBRC 12200 / NCIMB 9375 / NCTC 10341 / NRRL NRS-1264 / Gibson 46).